The primary structure comprises 364 residues: MAAAFTSSPVVSQPQFTAMNEQQCFSNESIAFFYNRSGKYLATEWNTVTKLVMGLGITVCIFIMLANLLVMVAIYVNRRFHFPIYYLMANLAAADFFAGLAYFYLMFNTGPNTRRLTVSTWLLRQGLIDTSLTVSVANLLAIAIERHITVFRMQLHARMSNRRVVVVIVVIWTMAIVMGAIPSVGWNCICDIENCSNMAPLYSDSYLVFWAIFNLVTFVVMVVLYAHIFGYVRQRTMRMSRHSSGPRRNRDTMMSLLKTVVIVLGAFIICWTPGLVLLLLDVCCPQCDVLAYEKFFLLLAEFNSAMNPIIYSYRDKEMSATFRQILCCQRSENTSGPTEGSDRSASSLNHTILAGVHSNDHSVV.

The Extracellular portion of the chain corresponds to 1-50 (MAAAFTSSPVVSQPQFTAMNEQQCFSNESIAFFYNRSGKYLATEWNTVTK). Disulfide bonds link cysteine 24/cysteine 190 and cysteine 188/cysteine 195. 2 N-linked (GlcNAc...) asparagine glycosylation sites follow: asparagine 27 and asparagine 35. Lysine 39 is a binding site for a 1-acyl-sn-glycero-3-phosphate. The chain crosses the membrane as a helical span at residues 51 to 75 (LVMGLGITVCIFIMLANLLVMVAIY). Topologically, residues 76–83 (VNRRFHFP) are cytoplasmic. Residues 84-107 (IYYLMANLAAADFFAGLAYFYLMF) traverse the membrane as a helical segment. The Extracellular segment spans residues 108–121 (NTGPNTRRLTVSTW). A helical membrane pass occupies residues 122-144 (LLRQGLIDTSLTVSVANLLAIAI). 124 to 129 (RQGLID) contributes to the a 1-acyl-sn-glycero-3-phosphate binding site. Residues 145–163 (ERHITVFRMQLHARMSNRR) are Cytoplasmic-facing. Residues 164-184 (VVVVIVVIWTMAIVMGAIPSV) form a helical membrane-spanning segment. Residues 185 to 204 (GWNCICDIENCSNMAPLYSD) lie on the Extracellular side of the membrane. A helical transmembrane segment spans residues 205–225 (SYLVFWAIFNLVTFVVMVVLY). Tryptophan 210 is an a 1-acyl-sn-glycero-3-phosphate binding site. The Cytoplasmic segment spans residues 226–255 (AHIFGYVRQRTMRMSRHSSGPRRNRDTMMS). Residues 256–280 (LLKTVVIVLGAFIICWTPGLVLLLL) traverse the membrane as a helical segment. Topologically, residues 281-294 (DVCCPQCDVLAYEK) are extracellular. The cysteines at positions 284 and 287 are disulfide-linked. Residues 295-315 (FFLLLAEFNSAMNPIIYSYRD) traverse the membrane as a helical segment. Over 316 to 364 (KEMSATFRQILCCQRSENTSGPTEGSDRSASSLNHTILAGVHSNDHSVV) the chain is Cytoplasmic. At serine 341 the chain carries Phosphoserine. Threonine 351 carries the phosphothreonine modification.

This sequence belongs to the G-protein coupled receptor 1 family. As to quaternary structure, interacts with RALA and GRK2. Interacts with GNAQ and GNA13. Interacts with CD14; the interaction is enhanced by exposure to bacterial lipopolysaccharide (LPS). N-glycosylated.

The protein localises to the cell surface. Its subcellular location is the cell membrane. It is found in the endosome. In terms of biological role, receptor for lysophosphatidic acid (LPA). Plays a role in the reorganization of the actin cytoskeleton, cell migration, differentiation and proliferation, and thereby contributes to the responses to tissue damage and infectious agents. Activates downstream signaling cascades via the G(i)/G(o), G(12)/G(13), and G(q) families of heteromeric G proteins. Signaling inhibits adenylyl cyclase activity and decreases cellular cAMP levels. Signaling triggers an increase of cytoplasmic Ca(2+) levels. Activates RALA; this leads to the activation of phospholipase C (PLC) and the formation of inositol 1,4,5-trisphosphate. Signaling mediates activation of down-stream MAP kinases. Contributes to the regulation of cell shape. Promotes Rho-dependent reorganization of the actin cytoskeleton in neuronal cells and neurite retraction. Promotes the activation of Rho and the formation of actin stress fibers. Promotes formation of lamellipodia at the leading edge of migrating cells via activation of RAC1. Through its function as LPA receptor, plays a role in chemotaxis and cell migration, including responses to injury and wounding. Plays a role in triggering inflammation in response to bacterial lipopolysaccharide (LPS) via its interaction with CD14. Promotes cell proliferation in response to LPA. Inhibits the intracellular ciliogenesis pathway in response to LPA and through AKT1 activation. Required for normal skeleton development. May play a role in osteoblast differentiation. Required for normal brain development. Required for normal proliferation, survival and maturation of newly formed neurons in the adult dentate gyrus. Plays a role in pain perception and in the initiation of neuropathic pain. The polypeptide is Lysophosphatidic acid receptor 1 (LPAR1) (Bos taurus (Bovine)).